The primary structure comprises 121 residues: Large ribosomal subunit protein bL12 (121 aa).

This sequence belongs to the bacterial ribosomal protein bL12 family. Homodimer. Part of the ribosomal stalk of the 50S ribosomal subunit. Forms a multimeric L10(L12)X complex, where L10 forms an elongated spine to which 2 to 4 L12 dimers bind in a sequential fashion. Binds GTP-bound translation factors.

In terms of biological role, forms part of the ribosomal stalk which helps the ribosome interact with GTP-bound translation factors. Is thus essential for accurate translation. The protein is Large ribosomal subunit protein bL12 of Pelagibacter ubique (strain HTCC1062).